Consider the following 332-residue polypeptide: Ferredoxin--NADP reductase 2 (332 aa).

The FAD site is built by Glu-37, Gln-45, Tyr-50, Val-90, Phe-124, Asp-285, and Thr-326.

The protein belongs to the ferredoxin--NADP reductase type 2 family. Homodimer. FAD serves as cofactor.

The catalysed reaction is 2 reduced [2Fe-2S]-[ferredoxin] + NADP(+) + H(+) = 2 oxidized [2Fe-2S]-[ferredoxin] + NADPH. This Bacillus pumilus (strain SAFR-032) protein is Ferredoxin--NADP reductase 2.